The chain runs to 150 residues: Transcriptional regulator MraZ (150 aa).

SpoVT-AbrB domains follow at residues 9–54 (QSIH…PPEE) and 83–126 (AEEC…NKST).

This sequence belongs to the MraZ family. In terms of assembly, forms oligomers.

It is found in the cytoplasm. The protein localises to the nucleoid. This chain is Transcriptional regulator MraZ, found in Syntrophobacter fumaroxidans (strain DSM 10017 / MPOB).